Reading from the N-terminus, the 335-residue chain is uncharacterized protein (335 aa).

Disordered regions lie at residues 152-179 (IQLPDRMPKTTNGTLADPNMPPKTTVND) and 252-271 (LDLFGSPSSENKSTAGSASL). A phosphoserine mark is found at Ser-257 and Ser-260. A compositionally biased stretch (polar residues) spans 257-271 (SPSSENKSTAGSASL).

This is an uncharacterized protein from Schizosaccharomyces pombe (strain 972 / ATCC 24843) (Fission yeast).